Here is a 1063-residue protein sequence, read N- to C-terminus: Cellulose synthase A catalytic subunit 7 [UDP-forming] (1063 aa).

At 1–213 (MDTASVTGGE…IPSSKINPYR (213 aa)) the chain is on the cytoplasmic side. Positions 18, 21, 37, 40, 45, 48, 60, and 63 each coordinate Zn(2+). An RING-type; degenerate zinc finger spans residues 18-64 (CRVCGEEVAAREDGKPFVACAECGFPVCKPCYEYERSEGTQCCPQCN). The segment at 116 to 154 (NGEQPAQKWRPGGPALSSFTGSVAGKDLEQEREMEGGME) is disordered. Residues 141–154 (KDLEQEREMEGGME) show a composition bias toward basic and acidic residues. A helical transmembrane segment spans residues 214-234 (IVIVLRLVVLCFFLKFRITTP). Residues 235-237 (AMD) lie on the Extracellular side of the membrane. A helical membrane pass occupies residues 238 to 258 (AVPLWLASVICELWFALSWIL). The Cytoplasmic segment spans residues 259 to 845 (DQLPKWSPVT…TNTIVYPFTS (587 aa)). Residues serine 297, lysine 303, glutamate 304, and aspartate 333 each coordinate UDP-alpha-D-glucose. Aspartate 333 is a catalytic residue. Residues 387-414 (VKERRAMKREYEEFKVRINALVAKAQKK) adopt a coiled-coil conformation. UDP-alpha-D-glucose is bound at residue lysine 474. Lysine 475 and aspartate 499 together coordinate Mn(2+). Aspartate 762 is a catalytic residue. A helical transmembrane segment spans residues 846–866 (IPLLAYCTIPAVCLLTGKFII). Over 867–871 (PTLNN) the chain is Extracellular. Residues 872 to 892 (LASIWFIALFLSIIATGVLEL) traverse the membrane as a helical segment. Over 893–907 (RWSGVSIEDWWRNEQ) the chain is Cytoplasmic. The helical transmembrane segment at 908–928 (FWVIGGVSAHLFAVFQGLLKV) threads the bilayer. The Extracellular portion of the chain corresponds to 929 to 959 (LGGVDTNFTVTSKAAADETDAFGELYLFKWT). Asparagine 935 carries an N-linked (GlcNAc...) asparagine glycan. The chain crosses the membrane as a helical span at residues 960–980 (TLLVPPTTLIIINMVGIVAGV). Topologically, residues 981-991 (SDAVNNGYGSW) are cytoplasmic. A helical transmembrane segment spans residues 992–1012 (GPLFGKLFFSFWVILHLYPFL). Residues 1013 to 1021 (KGLMGRQNR) lie on the Extracellular side of the membrane. A helical membrane pass occupies residues 1022-1042 (TPTIVVLWSILLASIFSLVWV). Over 1043–1063 (RIDPFIPKPKGPVLKPCGVSC) the chain is Cytoplasmic.

Belongs to the glycosyltransferase 2 family. Plant cellulose synthase subfamily. The cofactor is Mn(2+). Zn(2+) serves as cofactor.

The protein resides in the cell membrane. The catalysed reaction is [(1-&gt;4)-beta-D-glucosyl](n) + UDP-alpha-D-glucose = [(1-&gt;4)-beta-D-glucosyl](n+1) + UDP + H(+). It participates in glycan metabolism; plant cellulose biosynthesis. Catalytic subunit of cellulose synthase terminal complexes ('rosettes'), required for beta-1,4-glucan microfibril crystallization, a major mechanism of the cell wall formation. Involved in the secondary cell wall formation. In Oryza sativa subsp. japonica (Rice), this protein is Cellulose synthase A catalytic subunit 7 [UDP-forming] (CESA7).